A 324-amino-acid polypeptide reads, in one-letter code: Zinc finger C2HC domain-containing protein 1A (324 aa).

A C2HC/C3H-type 1 zinc finger spans residues 15–44; that stretch reads DLLPCKICGRTFFPLALKKHGPICQKTATK. Zn(2+) is bound by residues Cys-19, Cys-22, His-34, and Cys-38. The disordered stretch occupies residues 43-83; it reads TKKRKTFDSSRQRAEGTDIPTVKPLKPRPEPPKKPSNWRRK. Residues 48–58 are compositionally biased toward basic and acidic residues; the sequence is TFDSSRQRAEG. The C2HC/C3H-type 2 zinc finger occupies 118-147; sequence DYIQCPYCQRRFNENAADRHINFCKEQAAR. Zn(2+)-binding residues include Cys-122, Cys-125, His-137, and Cys-141. A disordered region spans residues 149–225; it reads SNKGKFSTDS…NKPQTLSPSH (77 aa). Low complexity predominate over residues 176–187; that stretch reads SNPPGIPSSGSS. Polar residues-rich tracts occupy residues 188–198 and 206–223; these read RLPQPSTTSKT and KASSVNSPLGNKPQTLSP. A Phosphoserine modification is found at Ser-222. Thr-243 carries the post-translational modification Phosphothreonine. Ser-291 carries the phosphoserine modification.

Belongs to the ZC2HC1 family. Zn(2+) serves as cofactor.

This chain is Zinc finger C2HC domain-containing protein 1A (Zc2hc1a), found in Mus musculus (Mouse).